We begin with the raw amino-acid sequence, 222 residues long: UPF0758 protein Cpar_0627 (222 aa).

Residues 100 to 222 (KIQGAQDVFE…WFSFRDHSLL (123 aa)) enclose the MPN domain. Residues His171, His173, and Asp184 each contribute to the Zn(2+) site. The short motif at 171-184 (HNHPSGDVQPSNAD) is the JAMM motif element.

This sequence belongs to the UPF0758 family.

The polypeptide is UPF0758 protein Cpar_0627 (Chlorobaculum parvum (strain DSM 263 / NCIMB 8327) (Chlorobium vibrioforme subsp. thiosulfatophilum)).